A 252-amino-acid polypeptide reads, in one-letter code: 5-oxoprolinase subunit A 1 (252 aa).

Belongs to the LamB/PxpA family. As to quaternary structure, forms a complex composed of PxpA, PxpB and PxpC.

It catalyses the reaction 5-oxo-L-proline + ATP + 2 H2O = L-glutamate + ADP + phosphate + H(+). Functionally, catalyzes the cleavage of 5-oxoproline to form L-glutamate coupled to the hydrolysis of ATP to ADP and inorganic phosphate. The chain is 5-oxoprolinase subunit A 1 from Pseudomonas aeruginosa (strain ATCC 15692 / DSM 22644 / CIP 104116 / JCM 14847 / LMG 12228 / 1C / PRS 101 / PAO1).